A 483-amino-acid chain; its full sequence is GDP-fucose protein O-fucosyltransferase 4 (483 aa).

A topological domain (cytoplasmic) is located at residue Met-1. A helical; Signal-anchor for type II membrane protein transmembrane segment spans residues 2–21 (ALCLWLFLVLPICCWCQGAV). Topologically, residues 22-483 (DLGDSGVFQP…RARGLSNDSR (462 aa)) are lumenal. 2 N-linked (GlcNAc...) asparagine glycosylation sites follow: Asn-151 and Asn-303. A disulfide bond links Cys-374 and Cys-377. The tract at residues 387–425 (RKAHRKNPKQNQPPQPKMANSSHMGCPLPSPGYGPVENV) is disordered. N-linked (GlcNAc...) asparagine glycans are attached at residues Asn-406, Asn-428, Asn-456, and Asn-480.

This sequence belongs to the glycosyltransferase 10 family.

It localises to the endoplasmic reticulum membrane. It catalyses the reaction L-threonyl-[protein] + GDP-beta-L-fucose = 3-O-(alpha-L-fucosyl)-L-threonyl-[protein] + GDP + H(+). It carries out the reaction L-seryl-[protein] + GDP-beta-L-fucose = 3-O-(alpha-L-fucosyl)-L-seryl-[protein] + GDP + H(+). Its pathway is protein modification; protein glycosylation. Functionally, protein O-fucosyltransferase that specifically catalyzes O-fucosylation of serine or threonine residues in EMI domains of target proteins. Attaches fucose through an O-glycosidic linkage. O-fucosylation of EMI domain-containing proteins may be required for facilitating protein folding and secretion. The polypeptide is GDP-fucose protein O-fucosyltransferase 4 (fut11) (Danio rerio (Zebrafish)).